Consider the following 108-residue polypeptide: UPF0102 protein SO_0299 (108 aa).

This sequence belongs to the UPF0102 family.

The polypeptide is UPF0102 protein SO_0299 (Shewanella oneidensis (strain ATCC 700550 / JCM 31522 / CIP 106686 / LMG 19005 / NCIMB 14063 / MR-1)).